Reading from the N-terminus, the 558-residue chain is MSRISTTSTTPSRVRAANSHYSVISKPRAQDDNGLTGGKPKSSGYDVKNDPAKRRSILLKRAKSAEEEMAVLAPQRARSVNRPAVVEQFGCPRRPISRKSEETVMATAAAEDEKRKRMEELEEKLVVNESLIKDLQLQVLNLKTELEEARNSNVELELNNRKLSQDLVSAEAKISSLSSNDKPAKEHQNSRFKDIQRLIASKLEQPKVKKEVAVESSRLSPPSPSPSRLPPTPPLPKFLVSPASSLGKRDENSSPFAPPTPPPPPPPPPPRPLAKAARAQKSPPVSQLFQLLNKQDNSRNLSQSVNGNKSQVNSAHNSIVGEIQNRSAHLIAIKADIETKGEFINDLIQKVLTTCFSDMEDVMKFVDWLDKELATLADERAVLKHFKWPEKKADTLQEAAVEYRELKKLEKELSSYSDDPNIHYGVALKKMANLLDKSEQRIRRLVRLRGSSMRSYQDFKIPVEWMLDSGMICKIKRASIKLAKTYMNRVANELQSARNLDRESTKEALLLQGVRFAYRTHQFAGGLDPETLCALEEIKQRVPSHLRLARGNMAGNLS.

The span at 1–15 (MSRISTTSTTPSRVR) shows a compositional bias: low complexity. Residues 1 to 54 (MSRISTTSTTPSRVRAANSHYSVISKPRAQDDNGLTGGKPKSSGYDVKNDPAKR) form a disordered region. A coiled-coil region spans residues 104–180 (VMATAAAEDE…EAKISSLSSN (77 aa)). Positions 207-285 (KVKKEVAVES…AARAQKSPPV (79 aa)) are disordered. 2 stretches are compositionally biased toward pro residues: residues 221–236 (PPSP…PPLP) and 256–272 (FAPP…PPRP). Residues 392–448 (KADTLQEAAVEYRELKKLEKELSSYSDDPNIHYGVALKKMANLLDKSEQRIRRLVRL) adopt a coiled-coil conformation.

It belongs to the IPGA1 family.

The protein resides in the cytoplasm. It localises to the cytoskeleton. Its function is as follows. Microtubule-associated protein probably involved in the regulation of microtubule organization. The polypeptide is INCREASED PETAL GROWTH ANISOTROPY 1-like protein 2 (Arabidopsis thaliana (Mouse-ear cress)).